Consider the following 600-residue polypeptide: Elongation factor 4 (600 aa).

Residues 4–186 (DTIRNFSIIA…EIVKKIPPPE (183 aa)) form the tr-type G domain. Residues 16-21 (DHGKST) and 133-136 (NKID) each bind GTP.

It belongs to the TRAFAC class translation factor GTPase superfamily. Classic translation factor GTPase family. LepA subfamily.

The protein localises to the cell inner membrane. The catalysed reaction is GTP + H2O = GDP + phosphate + H(+). In terms of biological role, required for accurate and efficient protein synthesis under certain stress conditions. May act as a fidelity factor of the translation reaction, by catalyzing a one-codon backward translocation of tRNAs on improperly translocated ribosomes. Back-translocation proceeds from a post-translocation (POST) complex to a pre-translocation (PRE) complex, thus giving elongation factor G a second chance to translocate the tRNAs correctly. Binds to ribosomes in a GTP-dependent manner. The chain is Elongation factor 4 from Geobacter sulfurreducens (strain ATCC 51573 / DSM 12127 / PCA).